A 211-amino-acid polypeptide reads, in one-letter code: Ras-related protein Rab-38 (211 aa).

Residues Gly-19, Val-20, Gly-21, Lys-22, Thr-23, Ser-24, Ser-35, Ser-36, Tyr-38, and Thr-41 each contribute to the GTP site. Position 23 (Thr-23) interacts with Mg(2+). Positions 32 to 46 match the Switch 1 motif; it reads QNFSSHYRATIGVDF. Mg(2+)-binding residues include Thr-41 and Asp-65. GTP-binding residues include Gly-68, Lys-128, Asp-130, Ala-160, and Lys-161. A Switch 2 motif is present at residues 68 to 81; the sequence is GQERFGNMTRVYYR. A lipid anchor (S-palmitoyl cysteine) is attached at Cys-205. The S-geranylgeranyl cysteine moiety is linked to residue Cys-208.

This sequence belongs to the small GTPase superfamily. Rab family. In terms of assembly, interacts with ANKRD27. The cofactor is Mg(2+). Although at least one in vitro system can process and methylate the prenylated C-terminal, in an in vitro system that normally express Rab-38 and in vivo the prenylated C-terminal is not proteolytically processed and not methylated. As to expression, expressed in melanocytes.

Its subcellular location is the cell membrane. The protein localises to the melanosome. The protein resides in the cytoplasmic vesicle. It is found in the phagosome. It localises to the phagosome membrane. Its subcellular location is the melanosome membrane. It carries out the reaction GTP + H2O = GDP + phosphate + H(+). Its activity is regulated as follows. Regulated by guanine nucleotide exchange factors (GEFs) including the BLOC-3 complex composed of HPS1 and HPS4 which promote the exchange of bound GDP for free GTP. Regulated by GTPase activating proteins (GAPs) including SGSM2 which increase the GTP hydrolysis activity. Inhibited by GDP dissociation inhibitors (GDIs). The small GTPases Rab are key regulators of intracellular membrane trafficking, from the formation of transport vesicles to their fusion with membranes. Rabs cycle between an inactive GDP-bound form and an active GTP-bound form that is able to recruit to membranes different sets of downstream effectors directly responsible for vesicle formation, movement, tethering and fusion. RAB38 may be involved in melanosomal transport and docking. Involved in the proper sorting of TYRP1. Involved in peripheral melanosomal distribution of TYRP1 in melanocytes; the function, which probably is implicating vesicle-trafficking, includes cooperation with ANKRD27 and VAMP7. Plays a role in the maturation of phagosomes that engulf pathogens, such as S.aureus and M.tuberculosis. Plays an important role in the control of melanin production and melanosome biogenesis. In concert with RAB32, regulates the proper trafficking of melanogenic enzymes TYR, TYRP1 and DCT/TYRP2 to melanosomes in melanocytes. In Homo sapiens (Human), this protein is Ras-related protein Rab-38.